We begin with the raw amino-acid sequence, 231 residues long: Small ribosomal subunit protein uS2 (231 aa).

It belongs to the universal ribosomal protein uS2 family.

The chain is Small ribosomal subunit protein uS2 from Blochmanniella floridana.